The following is a 343-amino-acid chain: tRNA N6-adenosine threonylcarbamoyltransferase (343 aa).

Fe cation contacts are provided by histidine 112 and histidine 116. Residues 135-139, aspartate 168, glycine 181, and asparagine 273 each bind substrate; that span reads LVSGG. Fe cation is bound at residue aspartate 301.

Belongs to the KAE1 / TsaD family. It depends on Fe(2+) as a cofactor.

It localises to the cytoplasm. It catalyses the reaction L-threonylcarbamoyladenylate + adenosine(37) in tRNA = N(6)-L-threonylcarbamoyladenosine(37) in tRNA + AMP + H(+). Its function is as follows. Required for the formation of a threonylcarbamoyl group on adenosine at position 37 (t(6)A37) in tRNAs that read codons beginning with adenine. Is involved in the transfer of the threonylcarbamoyl moiety of threonylcarbamoyl-AMP (TC-AMP) to the N6 group of A37, together with TsaE and TsaB. TsaD likely plays a direct catalytic role in this reaction. The sequence is that of tRNA N6-adenosine threonylcarbamoyltransferase from Azoarcus sp. (strain BH72).